A 183-amino-acid polypeptide reads, in one-letter code: Der GTPase-activating protein YihI (183 aa).

Positions 1 to 18 are enriched in low complexity; sequence MNQPSKAPRAPRSSAATP. Residues 1–114 are disordered; sequence MNQPSKAPRA…EEELAKLEND (114 aa). Positions 25-34 are enriched in basic and acidic residues; sequence RAELDQEARE. Residues 56-65 are compositionally biased toward low complexity; that stretch reads NQKNKAAAQA. Positions 92-114 are enriched in basic and acidic residues; that stretch reads PKAEAKPKPRLTPEEELAKLEND.

This sequence belongs to the YihI family. Interacts with Der.

In terms of biological role, a GTPase-activating protein (GAP) that modifies Der/EngA GTPase function. May play a role in ribosome biogenesis. In Serratia proteamaculans (strain 568), this protein is Der GTPase-activating protein YihI.